The sequence spans 812 residues: ATP-dependent zinc metalloprotease FtsH (812 aa).

Topologically, residues 1 to 21 (MPPSPPRPPKFPGSGRPESPN) are cytoplasmic. Residues 22–42 (WGVWVMVLLIVGVLAFGFFTP) form a helical membrane-spanning segment. Residues 43–241 (ESFGLGPRKE…TKFKRESGSW (199 aa)) are Extracellular-facing. A helical membrane pass occupies residues 242-262 (GGILLNLLPIVLILVILFFMF). Residues 263–812 (RAQSGGARGA…EFGKDGGEKK (550 aa)) are Cytoplasmic-facing. 333–340 (GAPGTGKT) lines the ATP pocket. H555 serves as a coordination point for Zn(2+). Residue E556 is part of the active site. Residues H559 and D631 each coordinate Zn(2+). The interval 739 to 812 (KNPPARVTPP…EFGKDGGEKK (74 aa)) is disordered. Basic and acidic residues-rich tracts occupy residues 757 to 785 (QPGK…RKME) and 803 to 812 (EFGKDGGEKK).

It in the central section; belongs to the AAA ATPase family. This sequence in the C-terminal section; belongs to the peptidase M41 family. In terms of assembly, homohexamer. Zn(2+) serves as cofactor.

The protein localises to the cell membrane. In terms of biological role, acts as a processive, ATP-dependent zinc metallopeptidase for both cytoplasmic and membrane proteins. Plays a role in the quality control of integral membrane proteins. The chain is ATP-dependent zinc metalloprotease FtsH from Akkermansia muciniphila (strain ATCC BAA-835 / DSM 22959 / JCM 33894 / BCRC 81048 / CCUG 64013 / CIP 107961 / Muc).